The chain runs to 259 residues: Haloacid dehalogenase-like hydrolase domain-containing protein 2 (259 aa).

2 residues coordinate Mg(2+): Asp13 and Asn15. Substrate-binding positions include 13–15 (DLN) and 46–47 (TN). The stretch at 47–72 (NTTKESKKDLLERLKKLEFEISEDEI) forms a coiled coil. At Lys50 the chain carries N6-succinyllysine. A substrate-binding site is contributed by Lys179. Mg(2+) is bound at residue Asp204.

The protein belongs to the HAD-like hydrolase superfamily. Requires Mg(2+) as cofactor.

The polypeptide is Haloacid dehalogenase-like hydrolase domain-containing protein 2 (Hdhd2) (Mus musculus (Mouse)).